A 473-amino-acid polypeptide reads, in one-letter code: Cysteine--tRNA ligase (473 aa).

Cys28 contributes to the Zn(2+) binding site. The 'HIGH' region motif lies at 30–40 (MTVYDYCHLGH). Cys209, His234, and Glu238 together coordinate Zn(2+). Residues 282 to 286 (KMSKS) carry the 'KMSKS' region motif. Residue Lys285 participates in ATP binding.

This sequence belongs to the class-I aminoacyl-tRNA synthetase family. As to quaternary structure, monomer. Requires Zn(2+) as cofactor.

Its subcellular location is the cytoplasm. It carries out the reaction tRNA(Cys) + L-cysteine + ATP = L-cysteinyl-tRNA(Cys) + AMP + diphosphate. This Neisseria gonorrhoeae (strain ATCC 700825 / FA 1090) protein is Cysteine--tRNA ligase.